Consider the following 215-residue polypeptide: Adenylate kinase (215 aa).

10–15 (GAGKGT) is an ATP binding site. The interval 30–59 (STGDMFRAAMKNNTELGRKAKSFMDNGDLV) is NMP. AMP contacts are provided by residues Thr-31, Arg-36, 57–59 (DLV), 85–88 (GFPR), and Gln-92. An LID region spans residues 126-163 (GRWICRTCGKTYHEIYNPPKVAGKCDLDGGELYQRDDD). Arg-127 lines the ATP pocket. Positions 130 and 133 each coordinate Zn(2+). 136-137 (TY) contributes to the ATP binding site. The Zn(2+) site is built by Cys-150 and Asp-153. Residues Arg-160 and Arg-171 each contribute to the AMP site. Gln-199 contributes to the ATP binding site.

The protein belongs to the adenylate kinase family. As to quaternary structure, monomer.

The protein resides in the cytoplasm. The catalysed reaction is AMP + ATP = 2 ADP. Its pathway is purine metabolism; AMP biosynthesis via salvage pathway; AMP from ADP: step 1/1. Its function is as follows. Catalyzes the reversible transfer of the terminal phosphate group between ATP and AMP. Plays an important role in cellular energy homeostasis and in adenine nucleotide metabolism. The chain is Adenylate kinase from Listeria monocytogenes serotype 4a (strain HCC23).